Consider the following 181-residue polypeptide: Small ribosomal subunit protein uS4 (181 aa).

In terms of domain architecture, S4 RNA-binding spans 108-172 (RRLQTQVYRR…SPLVSDIHSE (65 aa)).

Belongs to the universal ribosomal protein uS4 family. As to quaternary structure, part of the 30S ribosomal subunit. Contacts protein S5. The interaction surface between S4 and S5 is involved in control of translational fidelity.

Functionally, one of the primary rRNA binding proteins, it binds directly to 16S rRNA where it nucleates assembly of the body of the 30S subunit. In terms of biological role, with S5 and S12 plays an important role in translational accuracy. This is Small ribosomal subunit protein uS4 from Methanospirillum hungatei JF-1 (strain ATCC 27890 / DSM 864 / NBRC 100397 / JF-1).